An 80-amino-acid polypeptide reads, in one-letter code: Trefoil factor 3 (80 aa).

Positions 1 to 23 (MEARVLWLLVVVLVLGSSSLAVA) are cleaved as a signal peptide. One can recognise a P-type domain in the interval 30 to 73 (NLCEVPPKDRVDCGYPEITSEQCVNRGCCFDSSIHGVPWCFKPL). 3 disulfide bridges follow: Cys32-Cys58, Cys42-Cys57, and Cys52-Cys69.

In terms of assembly, monomer. Homodimer; disulfide-linked.

The protein resides in the secreted. The protein localises to the extracellular space. Its subcellular location is the extracellular matrix. It localises to the cytoplasm. In terms of biological role, involved in the maintenance and repair of the intestinal mucosa. Promotes the mobility of epithelial cells in healing processes (motogen). This is Trefoil factor 3 (TFF3) from Canis lupus familiaris (Dog).